Here is a 145-residue protein sequence, read N- to C-terminus: Ribonuclease P protein component (145 aa).

The span at 120-130 shows a compositional bias: low complexity; sequence LPAAPGTMPPA. Positions 120 to 145 are disordered; the sequence is LPAAPGTMPPARTMHPSSLSPTEPDL. The span at 134 to 145 shows a compositional bias: polar residues; the sequence is HPSSLSPTEPDL.

It belongs to the RnpA family. Consists of a catalytic RNA component (M1 or rnpB) and a protein subunit.

The enzyme catalyses Endonucleolytic cleavage of RNA, removing 5'-extranucleotides from tRNA precursor.. In terms of biological role, RNaseP catalyzes the removal of the 5'-leader sequence from pre-tRNA to produce the mature 5'-terminus. It can also cleave other RNA substrates such as 4.5S RNA. The protein component plays an auxiliary but essential role in vivo by binding to the 5'-leader sequence and broadening the substrate specificity of the ribozyme. In Xanthomonas oryzae pv. oryzae (strain MAFF 311018), this protein is Ribonuclease P protein component.